The following is a 765-amino-acid chain: Protein transport protein Sec23A (765 aa).

Zn(2+) is bound by residues Cys61, Cys66, Cys85, and Cys88. The stretch at 632–718 (PEPVLLDSSS…EHGGSQARFL (87 aa)) is one Gelsolin-like repeat.

This sequence belongs to the SEC23/SEC24 family. SEC23 subfamily. COPII is composed of at least five proteins: the Sec23/24 complex, the Sec13/31 complex and Sar1.

It is found in the cytoplasmic vesicle. It localises to the COPII-coated vesicle membrane. Its subcellular location is the endoplasmic reticulum membrane. The protein localises to the cytoplasm. The protein resides in the cytosol. In terms of biological role, component of the coat protein complex II (COPII) which promotes the formation of transport vesicles from the endoplasmic reticulum (ER). The coat has two main functions, the physical deformation of the endoplasmic reticulum membrane into vesicles and the selection of cargo molecules for their transport to the Golgi complex. The sequence is that of Protein transport protein Sec23A from Xenopus tropicalis (Western clawed frog).